The following is a 426-amino-acid chain: Glutamate-1-semialdehyde 2,1-aminomutase (426 aa).

N6-(pyridoxal phosphate)lysine is present on K263.

It belongs to the class-III pyridoxal-phosphate-dependent aminotransferase family. HemL subfamily. As to quaternary structure, homodimer. It depends on pyridoxal 5'-phosphate as a cofactor.

The protein localises to the cytoplasm. The enzyme catalyses (S)-4-amino-5-oxopentanoate = 5-aminolevulinate. It participates in porphyrin-containing compound metabolism; protoporphyrin-IX biosynthesis; 5-aminolevulinate from L-glutamyl-tRNA(Glu): step 2/2. The polypeptide is Glutamate-1-semialdehyde 2,1-aminomutase (Dichelobacter nodosus (strain VCS1703A)).